Here is a 432-residue protein sequence, read N- to C-terminus: D-amino acid dehydrogenase (432 aa).

3–17 (VLVLGSGVIGTASAY) is a binding site for FAD.

It belongs to the DadA oxidoreductase family. FAD is required as a cofactor.

It catalyses the reaction a D-alpha-amino acid + A + H2O = a 2-oxocarboxylate + AH2 + NH4(+). The protein operates within amino-acid degradation; D-alanine degradation; NH(3) and pyruvate from D-alanine: step 1/1. Functionally, oxidative deamination of D-amino acids. The chain is D-amino acid dehydrogenase from Ectopseudomonas mendocina (strain ymp) (Pseudomonas mendocina).